The primary structure comprises 205 residues: Large ribosomal subunit protein uL4 (205 aa).

The tract at residues 65 to 99 (RQKGTGGARHGSRKSPTFRHGGVYKGPTPRSHGHD) is disordered.

The protein belongs to the universal ribosomal protein uL4 family. Part of the 50S ribosomal subunit.

Its function is as follows. One of the primary rRNA binding proteins, this protein initially binds near the 5'-end of the 23S rRNA. It is important during the early stages of 50S assembly. It makes multiple contacts with different domains of the 23S rRNA in the assembled 50S subunit and ribosome. Functionally, forms part of the polypeptide exit tunnel. The polypeptide is Large ribosomal subunit protein uL4 (Ruegeria pomeroyi (strain ATCC 700808 / DSM 15171 / DSS-3) (Silicibacter pomeroyi)).